We begin with the raw amino-acid sequence, 322 residues long: Phosphatidylserine decarboxylase proenzyme (322 aa).

Active-site charge relay system; for autoendoproteolytic cleavage activity residues include D90, H147, and S254. The active-site Schiff-base intermediate with substrate; via pyruvic acid; for decarboxylase activity is the S254. A Pyruvic acid (Ser); by autocatalysis modification is found at S254. The interval T292 to V322 is disordered. Residues E308–V322 show a composition bias toward basic and acidic residues.

Belongs to the phosphatidylserine decarboxylase family. PSD-B subfamily. Prokaryotic type I sub-subfamily. Heterodimer of a large membrane-associated beta subunit and a small pyruvoyl-containing alpha subunit. The cofactor is pyruvate. Post-translationally, is synthesized initially as an inactive proenzyme. Formation of the active enzyme involves a self-maturation process in which the active site pyruvoyl group is generated from an internal serine residue via an autocatalytic post-translational modification. Two non-identical subunits are generated from the proenzyme in this reaction, and the pyruvate is formed at the N-terminus of the alpha chain, which is derived from the carboxyl end of the proenzyme. The autoendoproteolytic cleavage occurs by a canonical serine protease mechanism, in which the side chain hydroxyl group of the serine supplies its oxygen atom to form the C-terminus of the beta chain, while the remainder of the serine residue undergoes an oxidative deamination to produce ammonia and the pyruvoyl prosthetic group on the alpha chain. During this reaction, the Ser that is part of the protease active site of the proenzyme becomes the pyruvoyl prosthetic group, which constitutes an essential element of the active site of the mature decarboxylase.

The protein localises to the cell membrane. It carries out the reaction a 1,2-diacyl-sn-glycero-3-phospho-L-serine + H(+) = a 1,2-diacyl-sn-glycero-3-phosphoethanolamine + CO2. Its pathway is phospholipid metabolism; phosphatidylethanolamine biosynthesis; phosphatidylethanolamine from CDP-diacylglycerol: step 2/2. Catalyzes the formation of phosphatidylethanolamine (PtdEtn) from phosphatidylserine (PtdSer). This is Phosphatidylserine decarboxylase proenzyme from Escherichia coli O7:K1 (strain IAI39 / ExPEC).